The following is a 1736-amino-acid chain: Collagen alpha-2(XI) chain (1736 aa).

An N-terminal signal peptide occupies residues 1–27; that stretch reads MERCSRCHHLLLLVLLLLWLSAAPAWA. The Laminin G-like domain maps to 57-228; it reads DVAYRVSRPA…ESCDQKELEC (172 aa). Residues 215–486 are nonhelical region; the sequence is QAAYESCDQK…ILQQARVALR (272 aa). Disordered regions lie at residues 229–465 and 485–1539; these read EGGW…DKGP and LRGP…SPGG. Polar residues predominate over residues 258 to 270; it reads PQNQEPQAQSTES. Residues 363 to 376 show a composition bias toward low complexity; it reads ALSAETARSEAAAR. 3 consecutive Collagen-like domains span residues 399-447, 487-545, and 546-587; these read GPPG…GPPG, GPPG…ADGA, and RGMP…PPGE. Residues 400 to 413 are compositionally biased toward pro residues; sequence PPGPEGPAGFPGPP. A triple-helical region region spans residues 487-1500; that stretch reads GPPGPMGYTG…PGHPGPPGEV (1014 aa). A compositionally biased stretch (low complexity) spans 515–533; it reads DLGPQGPRGPQGLMGPPGK. The segment covering 615 to 624 has biased composition (pro residues); that stretch reads KGPPGIPGPP. A compositionally biased stretch (low complexity) spans 650–663; it reads QQGTPGTQGLPGPQ. A compositionally biased stretch (basic and acidic residues) spans 765-774; that stretch reads RGEDGPEGPK. A compositionally biased stretch (low complexity) spans 842 to 861; sequence PTGPRGQRGPRGATGKSGAK. Residues 994-1003 are compositionally biased toward gly residues; that stretch reads GTAGGPGLKG. The segment covering 1029–1040 has biased composition (pro residues); it reads IGPPGRPGPQGP. 2 Collagen-like domains span residues 1072–1127 and 1128–1172; these read GPAG…ADGE and PGAR…ETGD. Over residues 1115–1133 the composition is skewed to low complexity; that stretch reads PVGQPGAAGADGEPGARGP. Positions 1176 to 1187 are enriched in pro residues; sequence MGPPGPPGPRGP. Over residues 1217 to 1230 the composition is skewed to low complexity; the sequence is ESGSPGVQGEPGVK. 2 stretches are compositionally biased toward basic and acidic residues: residues 1232–1241 and 1287–1296; these read PRGERGEKGE and DGAKGDRGED. Low complexity-rich tracts occupy residues 1341–1364 and 1376–1386; these read PGAVGAPGKTGPVGPAGPAGKPGP and QQGRPGATGQA. The span at 1388–1397 shows a compositional bias: pro residues; the sequence is PPGPVGPPGL. Low complexity predominate over residues 1413-1422; that stretch reads PGLIGLIGPP. Residues 1444–1499 enclose the Collagen-like 6 domain; the sequence is GETGIPGASGPIGPGGPPGLPGPAGPKGAKGATGPAGPKGEKGVQGPPGHPGPPGE. A compositionally biased stretch (pro residues) spans 1457-1467; sequence PGGPPGLPGPA. The segment covering 1469–1481 has biased composition (low complexity); that stretch reads PKGAKGATGPAGP. The propeptide at 1501 to 1736 is C-terminal propeptide; the sequence is IQPLPIQMPK…VLLGPVCFMG (236 aa). A Fibrillar collagen NC1 domain is found at 1541–1735; sequence EEIFGSLDSL…GVLLGPVCFM (195 aa). Cys1571 and Cys1603 form a disulfide bridge. Asp1589, Asn1591, Gln1592, Cys1594, and Asp1597 together coordinate Ca(2+). Asn1604 and Asn1650 each carry an N-linked (GlcNAc...) asparagine glycan. Intrachain disulfides connect Cys1612-Cys1733 and Cys1655-Cys1689.

This sequence belongs to the fibrillar collagen family. Trimers composed of three different chains: alpha 1(XI), alpha 2(XI), and alpha 3(XI). Alpha 3(XI) is a post-translational modification of alpha 1(II). Alpha 1(V) can also be found instead of alpha 3(XI)=1(II). Post-translationally, prolines at the third position of the tripeptide repeating unit (G-X-Y) are hydroxylated in some or all of the chains.

It localises to the secreted. It is found in the extracellular space. The protein resides in the extracellular matrix. May play an important role in fibrillogenesis by controlling lateral growth of collagen II fibrils. This Bos taurus (Bovine) protein is Collagen alpha-2(XI) chain (COL11A2).